Here is a 376-residue protein sequence, read N- to C-terminus: Secreted LysM effector LysM9 (376 aa).

Residues 1 to 25 form the signal peptide; that stretch reads MGHFHLSNFIALIGILLVGPTATSG. The 49-residue stretch at 41 to 89 folds into the LysM domain; sequence SKYVVQAGETCSAIAQAHSITTADIETYNAQSWAWTGCGQISQGDFICL. A disordered region spans residues 190 to 219; the sequence is SSETSSSMTTSTSATTSVPTTTSTTTTTKT.

Belongs to the secreted LysM effector family.

The protein localises to the secreted. In terms of biological role, secreted LysM effector that might have a role in sequestration of chitin oligosaccharides (breakdown products of fungal cell walls that are released during invasion and act as triggers of host immunity) to dampen host defense. In Penicillium expansum (Blue mold rot fungus), this protein is Secreted LysM effector LysM9.